The sequence spans 379 residues: Nematocin receptor 1 (379 aa).

The Extracellular portion of the chain corresponds to 19 to 48; it reads HNLYLFQMLELQENITDSQPMDPPSLEIMM. N-linked (GlcNAc...) asparagine glycosylation is present at N32. Residues 49–69 form a helical membrane-spanning segment; that stretch reads LHHLMIILVTLFGNTLLIYVI. At 70–95 the chain is on the cytoplasmic side; that stretch reads YKNNAVLRRKRVTPVQMLMLHMCAAD. Residues 96 to 116 form a helical membrane-spanning segment; sequence ILFALISVGPTMAITATVPFF. At 117–124 the chain is on the extracellular side; the sequence is YGPNLLCK. C123 and C196 are disulfide-bonded. Residues 125-145 traverse the membrane as a helical segment; the sequence is LTKFLQVIPMYASSFLLVAIS. Residues 146–168 are Cytoplasmic-facing; that stretch reads ADRYQAICRPLASMKSSIYNRPA. The chain crosses the membrane as a helical span at residues 169–189; it reads LYSGIAWTAAILFSTPQLYLF. Topologically, residues 190–207 are extracellular; the sequence is EKRNGDCSENYTTALQYQ. N199 carries an N-linked (GlcNAc...) asparagine glycan. Residues 208–228 traverse the membrane as a helical segment; it reads LYVCLFNSVVWLLPSAIAGWL. The Cytoplasmic portion of the chain corresponds to 229–289; it reads YLCVCKAVWK…DRRRVQTVKL (61 aa). A helical transmembrane segment spans residues 290 to 310; that stretch reads TLTIVAANFVLWAPFCITSVI. Topologically, residues 311 to 320 are extracellular; that stretch reads DAVWPTAINS. Residue N319 is glycosylated (N-linked (GlcNAc...) asparagine). The chain crosses the membrane as a helical span at residues 321 to 343; that stretch reads TFATYIMFFGNLNSCMNPWLWFH. Residues 344–379 are Cytoplasmic-facing; sequence FNRKQLKRACPCRKSSEPLIQSLVYVHVMTSEQSDF.

The protein belongs to the G-protein coupled receptor 1 family. Vasopressin/oxytocin receptor subfamily. As to expression, detected in the left ASE gustatory neuron, the chemosensory neuron pairs ASH and ADF, and the PQR tail neuron. In males, detected in hook and tail sensory neurons involved in vulval sensing and hermaphrodite contact, and in spicule protractor muscles.

The protein resides in the cell membrane. Receptor for nematocin. The activity of this receptor is mediated by G proteins which activate a phosphatidylinositol-calcium second messenger system. The activity of this receptor may be modulated by ntr-2, leading to reduced intracellular cAMP production. Plays a role in gustatory associative learning. Also plays a role in male mating behavior. This chain is Nematocin receptor 1, found in Caenorhabditis elegans.